Reading from the N-terminus, the 529-residue chain is Meiosis 1 arrest protein (529 aa).

2 disordered regions span residues 180–201 and 504–529; these read KGIQ…DESS and AASK…PSHT. A compositionally biased stretch (polar residues) spans 188–200; sequence SPSPTEEPSNDES. Serine 516 bears the Phosphoserine mark.

As to expression, expressed in germ cells of the testis. Expressed from spermatogonia to spermatids. Expressed at very low levels in lung, stomach, thymus. Not detected in Sertoli cells.

The protein resides in the cytoplasm. In terms of biological role, required for meiosis I progression during spermatogenesis. The chain is Meiosis 1 arrest protein (M1ap) from Mus musculus (Mouse).